The chain runs to 106 residues: uncharacterized protein (106 aa).

The tract at residues 38–106 (KGNKKSKAAT…STHLPYHGSY (69 aa)) is disordered. Basic and acidic residues-rich tracts occupy residues 57–71 (TRQERDLTDRKHRPE) and 82–96 (WKKEVTTRSRPKETS).

Its subcellular location is the mitochondrion. This is an uncharacterized protein from Arabidopsis thaliana (Mouse-ear cress).